The sequence spans 753 residues: Ribosome biogenesis protein BOP1 homolog (753 aa).

The tract at residues 1–155 (MTKRSKGANE…RNTVGNVPLK (155 aa)) is disordered. 2 stretches are compositionally biased toward basic and acidic residues: residues 7–18 (GANEDKLIETKS) and 30–41 (KPVEAESLKEED). Composition is skewed to acidic residues over residues 64 to 75 (DDFDSDFSDSED) and 83 to 109 (EDGDVEFSDDDDVLEHDGSIDNEDDDG). The segment covering 110–121 (SEHVGSDNNEEH) has biased composition (basic and acidic residues). The segment covering 122–142 (GSDEDSERGEAVEESDSSEDE) has biased composition (acidic residues). WD repeat units lie at residues 421–462 (GHTG…KVWQ), 464–502 (DEAIMCVAWNPLSRLPVLAVAMGRDLFFLNTELGTDEEQ), 539–581 (RHFK…TQRL), 626–665 (TGLREISSMAIHPGGDNLIVGSKEGKMCWFDMDLSSKPYK), 669–708 (NHPKDITNVAVHRSYPLFASCSEDSTAYVFHGMVYNDLNQ), and 722–753 (SSKGGVLDCKFHPRQPWLFTAGADSIIKLYCH).

Belongs to the WD repeat BOP1/ERB1 family. As to quaternary structure, interacts with PES. Interacts with WDR12.

It localises to the nucleus. Its subcellular location is the nucleolus. It is found in the nucleoplasm. In terms of biological role, required for maturation of ribosomal RNAs and formation of the large ribosomal subunit. Plays an essential role in cell growth and survival through its regulation of ribosome biogenesis and mitotic progression. The protein is Ribosome biogenesis protein BOP1 homolog of Arabidopsis thaliana (Mouse-ear cress).